The sequence spans 380 residues: GDP-mannose:cellobiosyl-diphosphopolyprenol alpha-mannosyltransferase (380 aa).

Belongs to the glycosyltransferase group 1 family. Glycosyltransferase 4 subfamily.

It catalyses the reaction beta-D-Glc-(1-&gt;4)-alpha-D-Glc-di-trans,octa-cis-undecaprenyl diphosphate + GDP-alpha-D-mannose = alpha-D-Man-(1-&gt;3)-beta-D-Glc-(1-&gt;4)-alpha-D-Glc-1-di-trans,octa-cis-undecaprenyl diphosphate + GDP + H(+). Involved in the biosynthesis of the exopolysaccharide xanthan, a polymer that is comprised of repeating pentasaccharide units with the structure of a beta-(1,4)-linked D-glucose backbone with trisaccharide side chains composed of mannose-beta-(1,4)-glucuronic acid-beta-(1,2)-mannose attached to alternate glucose residues in the backbone by alpha-(1,3) linkages. Xanthan is involved in pathogenicity but has also been used in a variety of applications as a specialty polymer for commercial applications, including food additives, where they act as viscosifying, stabilizing, emulsifying, or gelling agents. The sequence is that of GDP-mannose:cellobiosyl-diphosphopolyprenol alpha-mannosyltransferase (gumH) from Xanthomonas campestris.